Reading from the N-terminus, the 745-residue chain is Phosphoribosylformylglycinamidine synthase subunit PurL (745 aa).

H47 is a catalytic residue. 2 residues coordinate ATP: Y50 and K90. E92 is a Mg(2+) binding site. Substrate contacts are provided by residues 93–96 (SHNH) and R115. H94 functions as the Proton acceptor in the catalytic mechanism. A Mg(2+)-binding site is contributed by D116. Position 240 (Q240) interacts with substrate. Residue D268 coordinates Mg(2+). 312–314 (ESQ) is a binding site for substrate. ATP is bound by residues N501 and G538. Residue N539 coordinates Mg(2+). S541 lines the substrate pocket.

It belongs to the FGAMS family. In terms of assembly, monomer. Part of the FGAM synthase complex composed of 1 PurL, 1 PurQ and 2 PurS subunits.

The protein resides in the cytoplasm. It carries out the reaction N(2)-formyl-N(1)-(5-phospho-beta-D-ribosyl)glycinamide + L-glutamine + ATP + H2O = 2-formamido-N(1)-(5-O-phospho-beta-D-ribosyl)acetamidine + L-glutamate + ADP + phosphate + H(+). Its pathway is purine metabolism; IMP biosynthesis via de novo pathway; 5-amino-1-(5-phospho-D-ribosyl)imidazole from N(2)-formyl-N(1)-(5-phospho-D-ribosyl)glycinamide: step 1/2. Functionally, part of the phosphoribosylformylglycinamidine synthase complex involved in the purines biosynthetic pathway. Catalyzes the ATP-dependent conversion of formylglycinamide ribonucleotide (FGAR) and glutamine to yield formylglycinamidine ribonucleotide (FGAM) and glutamate. The FGAM synthase complex is composed of three subunits. PurQ produces an ammonia molecule by converting glutamine to glutamate. PurL transfers the ammonia molecule to FGAR to form FGAM in an ATP-dependent manner. PurS interacts with PurQ and PurL and is thought to assist in the transfer of the ammonia molecule from PurQ to PurL. This is Phosphoribosylformylglycinamidine synthase subunit PurL from Leptospira interrogans serogroup Icterohaemorrhagiae serovar copenhageni (strain Fiocruz L1-130).